The primary structure comprises 88 residues: Apolipoprotein C-I (88 aa).

The N-terminal stretch at 1–26 is a signal peptide; sequence MRLILSLPVLAVVLAMVLEGPAPAQA.

Belongs to the apolipoprotein C1 family.

It localises to the secreted. In terms of biological role, inhibitor of lipoprotein binding to the low density lipoprotein (LDL) receptor, LDL receptor-related protein, and very low density lipoprotein (VLDL) receptor. Associates with high density lipoproteins (HDL) and the triacylglycerol-rich lipoproteins in the plasma and makes up about 10% of the protein of the VLDL and 2% of that of HDL. Appears to interfere directly with fatty acid uptake and is also the major plasma inhibitor of cholesteryl ester transfer protein (CETP). Binds free fatty acids and reduces their intracellular esterification. Modulates the interaction of APOE with beta-migrating VLDL and inhibits binding of beta-VLDL to the LDL receptor-related protein. This chain is Apolipoprotein C-I (APOC1), found in Cynopterus brachyotis (Lesser short-nosed fruit bat).